We begin with the raw amino-acid sequence, 267 residues long: Type II pantothenate kinase (267 aa).

Aspartate 6–lysine 13 provides a ligand contact to ATP. The active-site Proton acceptor is glutamate 70. Residues threonine 99, glycine 121–glutamine 125, tyrosine 137, and serine 225 each bind ATP.

It belongs to the type II pantothenate kinase family. In terms of assembly, homodimer.

Its subcellular location is the cytoplasm. The enzyme catalyses (R)-pantothenate + ATP = (R)-4'-phosphopantothenate + ADP + H(+). It participates in cofactor biosynthesis; coenzyme A biosynthesis; CoA from (R)-pantothenate: step 1/5. In terms of biological role, catalyzes the phosphorylation of pantothenate (Pan), the first step in CoA biosynthesis. The polypeptide is Type II pantothenate kinase (Staphylococcus aureus (strain bovine RF122 / ET3-1)).